A 644-amino-acid polypeptide reads, in one-letter code: Threonine--tRNA ligase (644 aa).

Positions 1–61 constitute a TGS domain; it reads MVAITLPDGN…TQDASVEIVT (61 aa). Residues 242–533 form a catalytic region; sequence DHRKIGKALN…LIEHYAGWMP (292 aa). The Zn(2+) site is built by Cys333, His384, and His510.

It belongs to the class-II aminoacyl-tRNA synthetase family. As to quaternary structure, homodimer. Zn(2+) serves as cofactor.

The protein localises to the cytoplasm. The catalysed reaction is tRNA(Thr) + L-threonine + ATP = L-threonyl-tRNA(Thr) + AMP + diphosphate + H(+). Its function is as follows. Catalyzes the attachment of threonine to tRNA(Thr) in a two-step reaction: L-threonine is first activated by ATP to form Thr-AMP and then transferred to the acceptor end of tRNA(Thr). Also edits incorrectly charged L-seryl-tRNA(Thr). This is Threonine--tRNA ligase from Psychrobacter sp. (strain PRwf-1).